Here is a 394-residue protein sequence, read N- to C-terminus: Phosphopentomutase (394 aa).

Mn(2+) is bound by residues Asp13, Asp286, His291, Asp327, His328, and His339.

The protein belongs to the phosphopentomutase family. Requires Mn(2+) as cofactor.

It localises to the cytoplasm. The enzyme catalyses 2-deoxy-alpha-D-ribose 1-phosphate = 2-deoxy-D-ribose 5-phosphate. It catalyses the reaction alpha-D-ribose 1-phosphate = D-ribose 5-phosphate. The protein operates within carbohydrate degradation; 2-deoxy-D-ribose 1-phosphate degradation; D-glyceraldehyde 3-phosphate and acetaldehyde from 2-deoxy-alpha-D-ribose 1-phosphate: step 1/2. Isomerase that catalyzes the conversion of deoxy-ribose 1-phosphate (dRib-1-P) and ribose 1-phosphate (Rib-1-P) to deoxy-ribose 5-phosphate (dRib-5-P) and ribose 5-phosphate (Rib-5-P), respectively. The sequence is that of Phosphopentomutase from Bacillus cereus (strain ATCC 10987 / NRS 248).